Consider the following 312-residue polypeptide: Olfactory receptor 10P22 (312 aa).

The Extracellular segment spans residues 1-26; it reads MGDDNDTDITEFILLGFSGYGFLQGH. A glycan (N-linked (GlcNAc...) asparagine) is linked at Asn5. The chain crosses the membrane as a helical span at residues 27-47; that stretch reads LFWGVLCIYVVTLLGNSLIVL. Topologically, residues 48-57 are cytoplasmic; sequence LTLADSALHS. Residues 58 to 78 traverse the membrane as a helical segment; it reads PMYFFLRHFSVVEILYTTTIV. Over 79 to 89 the chain is Extracellular; it reads PRMLADLRSSC. The chain crosses the membrane as a helical span at residues 90–110; the sequence is PTIPLASCFTQLYFFALFGIA. Residues 111–143 are Cytoplasmic-facing; the sequence is ECCLLTAMAYDRYAAICCPLHYTTLMSQGTYTG. A helical membrane pass occupies residues 144–164; that stretch reads LVGASYLAGVISGTTHSIFIF. At 165–205 the chain is on the extracellular side; it reads TLPFRGAKTIHHFLCDILPVLRLATASTFWGEVGNLFVTIT. A helical transmembrane segment spans residues 206–226; sequence FIFVPFLLIVASYACILVTIL. At 227–236 the chain is on the cytoplasmic side; that stretch reads GVATSQGRQK. A helical transmembrane segment spans residues 237 to 257; it reads LFSTCSSHLFVVILFFGTATV. At 258 to 271 the chain is on the extracellular side; it reads AYMRPQADSFGNTD. Residues 272 to 292 traverse the membrane as a helical segment; that stretch reads QILTLVYTVVTPMCNPFVYSL. At 293–312 the chain is on the cytoplasmic side; the sequence is RNKEVTGAMRRLMKRYLWGP.

This sequence belongs to the G-protein coupled receptor 1 family.

The protein resides in the cell membrane. Functionally, odorant receptor. The polypeptide is Olfactory receptor 10P22 (Mus musculus (Mouse)).